We begin with the raw amino-acid sequence, 492 residues long: Beta-glucosidase 38 (492 aa).

Positions 1–21 (MNMPLLLLIAIVVVSLSHGNG) are cleaved as a signal peptide. Gln45 is a binding site for a beta-D-glucoside. Asn73 and Asn77 each carry an N-linked (GlcNAc...) asparagine glycan. A beta-D-glucoside is bound by residues His146 and 191–192 (NE). Glu192 serves as the catalytic Proton donor. Residues Cys211 and Cys214 are joined by a disulfide bond. Asn310 is a glycosylation site (N-linked (GlcNAc...) asparagine). Position 331 (Tyr331) interacts with a beta-D-glucoside. An N-linked (GlcNAc...) asparagine glycan is attached at Asn341. Glu400 is an a beta-D-glucoside binding site. Glu400 serves as the catalytic Nucleophile. Asn408 is a glycosylation site (N-linked (GlcNAc...) asparagine). A beta-D-glucoside contacts are provided by residues Trp447, 454–455 (EW), and Phe463.

This sequence belongs to the glycosyl hydrolase 1 family.

The catalysed reaction is Hydrolysis of terminal, non-reducing beta-D-glucosyl residues with release of beta-D-glucose.. The sequence is that of Beta-glucosidase 38 (BGLU38) from Oryza sativa subsp. japonica (Rice).